Reading from the N-terminus, the 197-residue chain is MKLLEDRIHTDGQVLGQDILKVDRFLTHQVDYQLMKEIGKRFAQVYANAGVTKVVTIEASGIAPALYAAESLNVPMIFAKKAKNVTMNDDLLITEVYSFTKKLTSTVQISSKLIEEGDKVLIIDDFLANGQAALGLVHLMEQAKAEVVGLGMVIEKSFQDGRQKLLDQGMKLTSLARIEKFEDGKVIFAPADDKDFD.

Xanthine-binding residues include L20 and T27. 128 to 132 (ANGQA) provides a ligand contact to 5-phospho-alpha-D-ribose 1-diphosphate. K156 provides a ligand contact to xanthine.

Belongs to the purine/pyrimidine phosphoribosyltransferase family. Xpt subfamily. As to quaternary structure, homodimer.

The protein localises to the cytoplasm. The catalysed reaction is XMP + diphosphate = xanthine + 5-phospho-alpha-D-ribose 1-diphosphate. It functions in the pathway purine metabolism; XMP biosynthesis via salvage pathway; XMP from xanthine: step 1/1. Converts the preformed base xanthine, a product of nucleic acid breakdown, to xanthosine 5'-monophosphate (XMP), so it can be reused for RNA or DNA synthesis. The chain is Xanthine phosphoribosyltransferase from Lactococcus lactis subsp. lactis (strain IL1403) (Streptococcus lactis).